Consider the following 546-residue polypeptide: MAKEIKFSDSARNLLFEGVRQLHDAVKVTMGPKGRNVLIQKSYGAPSITKDGVSVAKEIELSCPVANMGAQLVKEVASKTADAAGDGTTTATVLAYSIFKEGLRNITAGANPIEVKRGMDKAAEAIINELKKSSKKVGGKEEITQVATISANSDHNIGKLIADAMEKVGKDGVITVEEAKGIEDELDVVEGMQFDRGYLSPYFVTNAEKMTAQLDNAYILLTDKKISSMKDILPLLEKTMKEGKPLLIIAEDIEGEALTTLVVNKLRGVLNIAAVKAPGFGDRRKEMLKDIAVLTGGQVISEELGLTLENAEVEFLGKAGRIVIDKDNTTIVDGKGHSHDVKDRVAQIKTQIASTTSDYDKEKLQERLAKLSGGVAVIKVGAASEVEMKEKKDRVDDALSATKAAVEEGIVIGGGAALIRAAQKVHLHLNGDEKVGYEIIMRAIKAPLAQIAINAGYDGGVVVNEVQKHEGHFGFNASNGEYVDMFKEGIIDPLKVERIALQNAVSVSSLLLTTEATVHEIKEEKATPAMPDMGGMGGMGGMGGMM.

Residues 29–32 (TMGP), K50, 86–90 (DGTTT), G414, and D492 each bind ATP.

The protein belongs to the chaperonin (HSP60) family. In terms of assembly, forms a cylinder of 14 subunits composed of two heptameric rings stacked back-to-back. Interacts with the co-chaperonin GroES.

Its subcellular location is the cytoplasm. It catalyses the reaction ATP + H2O + a folded polypeptide = ADP + phosphate + an unfolded polypeptide.. Together with its co-chaperonin GroES, plays an essential role in assisting protein folding. The GroEL-GroES system forms a nano-cage that allows encapsulation of the non-native substrate proteins and provides a physical environment optimized to promote and accelerate protein folding. The polypeptide is Chaperonin GroEL (Helicobacter acinonychis (strain Sheeba)).